Reading from the N-terminus, the 125-residue chain is Small ribosomal subunit protein uS13 (125 aa).

Positions 93–125 (RRGLPVRGQRTKTNARTRKGPKRTVAGKKKAGR) are disordered.

This sequence belongs to the universal ribosomal protein uS13 family. Part of the 30S ribosomal subunit. Forms a loose heterodimer with protein S19. Forms two bridges to the 50S subunit in the 70S ribosome.

Functionally, located at the top of the head of the 30S subunit, it contacts several helices of the 16S rRNA. In the 70S ribosome it contacts the 23S rRNA (bridge B1a) and protein L5 of the 50S subunit (bridge B1b), connecting the 2 subunits; these bridges are implicated in subunit movement. Contacts the tRNAs in the A and P-sites. The protein is Small ribosomal subunit protein uS13 of Renibacterium salmoninarum (strain ATCC 33209 / DSM 20767 / JCM 11484 / NBRC 15589 / NCIMB 2235).